The chain runs to 1434 residues: Nitric oxide synthase 1 (1434 aa).

The interval methionine 1 to leucine 205 is interaction with NOSIP. The region spanning serine 17 to glycine 99 is the PDZ domain. 2 disordered regions span residues threonine 112–threonine 192 and asparagine 276–cysteine 302. The interval tyrosine 163 to aspartate 245 is interaction with DYNLL1/PIN. The segment covering proline 285 to proline 299 has biased composition (polar residues). Serine 339 lines the (6R)-L-erythro-5,6,7,8-tetrahydrobiopterin pocket. Heme b is bound at residue cysteine 420. L-arginine contacts are provided by glutamine 483, tryptophan 592, tyrosine 593, and glutamate 597. Valine 682, tryptophan 683, and phenylalanine 696 together coordinate (6R)-L-erythro-5,6,7,8-tetrahydrobiopterin. Residue tyrosine 711 coordinates heme b. The interval lysine 730–methionine 750 is calmodulin-binding. The Flavodoxin-like domain occupies alanine 760–phenylalanine 940. Residues threonine 766, glutamate 767, threonine 768, lysine 770, serine 771, serine 812, threonine 813, and glycine 817 each contribute to the FMN site. A phosphoserine mark is found at serine 852, serine 862, and serine 863. Serine 891, histidine 896, cysteine 898, glutamate 924, and glutamine 928 together coordinate FMN. Positions lysine 995–proline 1242 constitute an FAD-binding FR-type domain. Arginine 1015 is a binding site for NADP(+). FAD is bound by residues histidine 1037, arginine 1178, tyrosine 1179, tyrosine 1180, serine 1181, threonine 1196, and alanine 1198. Serine 1201 is a binding site for NADP(+). Residues tyrosine 1202, valine 1215, cysteine 1216, and serine 1217 each coordinate FAD. NADP(+)-binding residues include threonine 1256, arginine 1289, serine 1318, arginine 1319, lysine 1325, tyrosine 1327, glutamine 1329, aspartate 1362, threonine 1403, and arginine 1405.

The protein belongs to the NOS family. In terms of assembly, homodimer. Interacts with DLG4; the interaction possibly being prevented by the association between NOS1 and CAPON. Forms a ternary complex with CAPON and RASD1. Forms a ternary complex with CAPON and SYN1. Interacts with ZDHHC23. Interacts with NOSIP; which may impair its synaptic location. Interacts with HTR4. Interacts with SLC6A4. Interacts with VAC14. Interacts (via N-terminal domain) with DLG4 (via N-terminal tandem pair of PDZ domains). Interacts with SLC6A4. Forms a complex with ASL, ASS1 and SLC7A1; the complex regulates cell-autonomous L-arginine synthesis and citrulline recycling while channeling extracellular L-arginine to nitric oxide synthesis pathway. Interacts with DMD; localizes NOS1 to sarcolemma in muscle cells. Interacts with DYNLL1; inhibits the nitric oxide synthase activity. Heme b is required as a cofactor. FAD serves as cofactor. Requires FMN as cofactor. It depends on (6R)-L-erythro-5,6,7,8-tetrahydrobiopterin as a cofactor. In terms of processing, ubiquitinated; mediated by STUB1/CHIP in the presence of Hsp70 and Hsp40 (in vitro). As to expression, isoform 1 is ubiquitously expressed: detected in skeletal muscle and brain, also in testis, lung and kidney, and at low levels in heart, adrenal gland and retina. Not detected in the platelets. Isoform 3 is expressed only in testis. Isoform 4 is detected in testis, skeletal muscle, lung, and kidney, at low levels in the brain, but not in the heart and adrenal gland.

The protein localises to the cell membrane. It is found in the sarcolemma. Its subcellular location is the cell projection. It localises to the dendritic spine. The catalysed reaction is 2 L-arginine + 3 NADPH + 4 O2 + H(+) = 2 L-citrulline + 2 nitric oxide + 3 NADP(+) + 4 H2O. With respect to regulation, stimulated by calcium/calmodulin. Inhibited by DYNLL1 that prevents the dimerization of the protein. Inhibited by NOSIP. In terms of biological role, produces nitric oxide (NO) which is a messenger molecule with diverse functions throughout the body. In the brain and peripheral nervous system, NO displays many properties of a neurotransmitter. Probably has nitrosylase activity and mediates cysteine S-nitrosylation of cytoplasmic target proteins such SRR. The polypeptide is Nitric oxide synthase 1 (Homo sapiens (Human)).